A 204-amino-acid polypeptide reads, in one-letter code: Thiamine-phosphate synthase (204 aa).

4-amino-2-methyl-5-(diphosphooxymethyl)pyrimidine-binding positions include 37-41 (QVREK) and asparagine 69. 2 residues coordinate Mg(2+): aspartate 70 and aspartate 89. 4-amino-2-methyl-5-(diphosphooxymethyl)pyrimidine is bound at residue serine 108. 134–136 (TGT) contributes to the 2-[(2R,5Z)-2-carboxy-4-methylthiazol-5(2H)-ylidene]ethyl phosphate binding site. Lysine 137 is a binding site for 4-amino-2-methyl-5-(diphosphooxymethyl)pyrimidine. 2-[(2R,5Z)-2-carboxy-4-methylthiazol-5(2H)-ylidene]ethyl phosphate contacts are provided by residues glycine 165 and 185–186 (IS).

The protein belongs to the thiamine-phosphate synthase family. Mg(2+) serves as cofactor.

The catalysed reaction is 2-[(2R,5Z)-2-carboxy-4-methylthiazol-5(2H)-ylidene]ethyl phosphate + 4-amino-2-methyl-5-(diphosphooxymethyl)pyrimidine + 2 H(+) = thiamine phosphate + CO2 + diphosphate. It carries out the reaction 2-(2-carboxy-4-methylthiazol-5-yl)ethyl phosphate + 4-amino-2-methyl-5-(diphosphooxymethyl)pyrimidine + 2 H(+) = thiamine phosphate + CO2 + diphosphate. The enzyme catalyses 4-methyl-5-(2-phosphooxyethyl)-thiazole + 4-amino-2-methyl-5-(diphosphooxymethyl)pyrimidine + H(+) = thiamine phosphate + diphosphate. It functions in the pathway cofactor biosynthesis; thiamine diphosphate biosynthesis; thiamine phosphate from 4-amino-2-methyl-5-diphosphomethylpyrimidine and 4-methyl-5-(2-phosphoethyl)-thiazole: step 1/1. Condenses 4-methyl-5-(beta-hydroxyethyl)thiazole monophosphate (THZ-P) and 2-methyl-4-amino-5-hydroxymethyl pyrimidine pyrophosphate (HMP-PP) to form thiamine monophosphate (TMP). This is Thiamine-phosphate synthase from Clostridium novyi (strain NT).